Here is a 442-residue protein sequence, read N- to C-terminus: F-box/FBD/LRR-repeat protein At3g14710 (442 aa).

The F-box domain maps to 26–73; that stretch reads DKFSSLLESVVSIILSQLPTAEAVSTSVLSKSWKNIWTNITDLHFDDT. LRR repeat units lie at residues 126-147, 151-172, and 173-194; these read NLQR…SLFP, SLVE…AILP, and NLKF…SKNL. The FBD domain maps to 370-414; sequence VESPDCVTTMLKVLQIRNFKPNRLQISVLRYVLDNAEILGSVILS.

This Arabidopsis thaliana (Mouse-ear cress) protein is F-box/FBD/LRR-repeat protein At3g14710.